Consider the following 266-residue polypeptide: Amylovoran biosynthesis glycosyltransferase AmsE (266 aa).

Belongs to the glycosyltransferase 2 family.

It participates in glycan metabolism; exopolysaccharide biosynthesis. Functionally, involved in the biosynthesis of amylovoran which functions as a virulence factor. This chain is Amylovoran biosynthesis glycosyltransferase AmsE (amsE), found in Erwinia amylovora (Fire blight bacteria).